The sequence spans 260 residues: Transcription factor BEE 1 (260 aa).

The tract at residues 118–139 (ETGSLRRGKRLKKKKEEEDEKE) is disordered. The 51-residue stretch at 151–201 (QATDSHSLAERVRRGKINERLRCLQDMVPGCYKAMGMATMLDEIINYVQSL) folds into the bHLH domain.

Its subcellular location is the nucleus. Functionally, positive regulator of brassinosteroid signaling. This Arabidopsis thaliana (Mouse-ear cress) protein is Transcription factor BEE 1 (BEE1).